A 76-amino-acid chain; its full sequence is Omega-scoloptoxin(13)-Ssm2b (76 aa).

Positions 1–22 are cleaved as a signal peptide; it reads MAYIYALIFAIVVCMNTDVIQA.

It belongs to the scoloptoxin-13 family. Contains 3 disulfide bonds. Expressed by the venom gland.

It localises to the secreted. Its function is as follows. Inhibits voltage-gated calcium channel (Cav) currents. This Scolopendra mutilans (Chinese red-headed centipede) protein is Omega-scoloptoxin(13)-Ssm2b.